The primary structure comprises 323 residues: uncharacterized protein (323 aa).

2 helical membrane passes run Leu232 to Leu252 and Ser267 to Gly287.

This sequence belongs to the glycosyltransferase 2 family. GtrB subfamily.

The protein localises to the cell membrane. This is an uncharacterized protein from Bacillus subtilis (strain 168).